The chain runs to 714 residues: Hormonally up-regulated neu tumor-associated kinase (714 aa).

Low complexity predominate over residues 1–15; it reads MPAAAGDGLLGEPAA. Residues 1-26 are disordered; that stretch reads MPAAAGDGLLGEPAAPGGGGGAEDAA. The 259-residue stretch at 62 to 320 folds into the Protein kinase domain; sequence LIGSRKLGEG…IQQALANRWL (259 aa). ATP is bound by residues 68 to 76 and Lys-91; that span reads LGEGSFAKV. Residue Asp-186 is the Proton acceptor of the active site. Over residues 437-461 the composition is skewed to basic and acidic residues; it reads KKPKEQEKRGDFLHRPFSKKLDKNL. Disordered regions lie at residues 437–471, 518–552, and 590–660; these read KKPK…SGSL, MEFI…HKED, and ARRN…VKSR. Over residues 599–611 the composition is skewed to low complexity; that stretch reads LSPGLPSGSMSPL. A compositionally biased stretch (basic and acidic residues) spans 623-635; sequence AHEDKNSPPKEEG.

It belongs to the protein kinase superfamily. CAMK Ser/Thr protein kinase family. SNF1 subfamily.

It catalyses the reaction L-seryl-[protein] + ATP = O-phospho-L-seryl-[protein] + ADP + H(+). The enzyme catalyses L-threonyl-[protein] + ATP = O-phospho-L-threonyl-[protein] + ADP + H(+). This is Hormonally up-regulated neu tumor-associated kinase (HUNK) from Pan troglodytes (Chimpanzee).